The primary structure comprises 214 residues: 3,4-dihydroxy-2-butanone 4-phosphate synthase (214 aa).

D-ribulose 5-phosphate contacts are provided by residues 37–38 (RE), Asp-42, 150–154 (RRGHT), and Glu-174. A Mg(2+)-binding site is contributed by Glu-38. A Mg(2+)-binding site is contributed by His-153.

This sequence belongs to the DHBP synthase family. Homodimer. Mg(2+) serves as cofactor. It depends on Mn(2+) as a cofactor.

It catalyses the reaction D-ribulose 5-phosphate = (2S)-2-hydroxy-3-oxobutyl phosphate + formate + H(+). The protein operates within cofactor biosynthesis; riboflavin biosynthesis; 2-hydroxy-3-oxobutyl phosphate from D-ribulose 5-phosphate: step 1/1. In terms of biological role, catalyzes the conversion of D-ribulose 5-phosphate to formate and 3,4-dihydroxy-2-butanone 4-phosphate. The chain is 3,4-dihydroxy-2-butanone 4-phosphate synthase from Pasteurella multocida (strain Pm70).